Consider the following 411-residue polypeptide: NADH-quinone oxidoreductase subunit D (411 aa).

This sequence belongs to the complex I 49 kDa subunit family. In terms of assembly, NDH-1 is composed of 14 different subunits. Subunits NuoB, C, D, E, F, and G constitute the peripheral sector of the complex.

Its subcellular location is the cell inner membrane. It carries out the reaction a quinone + NADH + 5 H(+)(in) = a quinol + NAD(+) + 4 H(+)(out). Functionally, NDH-1 shuttles electrons from NADH, via FMN and iron-sulfur (Fe-S) centers, to quinones in the respiratory chain. The immediate electron acceptor for the enzyme in this species is believed to be ubiquinone. Couples the redox reaction to proton translocation (for every two electrons transferred, four hydrogen ions are translocated across the cytoplasmic membrane), and thus conserves the redox energy in a proton gradient. In Phenylobacterium zucineum (strain HLK1), this protein is NADH-quinone oxidoreductase subunit D.